The following is a 343-amino-acid chain: Ribosomal RNA small subunit methyltransferase C (343 aa).

This sequence belongs to the methyltransferase superfamily. RsmC family. As to quaternary structure, monomer.

It localises to the cytoplasm. It carries out the reaction guanosine(1207) in 16S rRNA + S-adenosyl-L-methionine = N(2)-methylguanosine(1207) in 16S rRNA + S-adenosyl-L-homocysteine + H(+). In terms of biological role, specifically methylates the guanine in position 1207 of 16S rRNA in the 30S particle. The sequence is that of Ribosomal RNA small subunit methyltransferase C from Escherichia coli (strain SMS-3-5 / SECEC).